Reading from the N-terminus, the 1025-residue chain is Multidrug resistance protein MdtC (1025 aa).

A run of 12 helical transmembrane segments spans residues Phe3–Leu23, Glu333–Leu353, Ile360–Cys380, Leu387–Leu407, Val431–Leu451, Phe463–Pro483, Leu528–Pro548, Val853–Ser873, Val875–Leu895, Leu897–Val917, Pro953–Gly973, and Ile984–Val1004.

Belongs to the resistance-nodulation-cell division (RND) (TC 2.A.6) family. MdtC subfamily. Part of a tripartite efflux system composed of MdtA, MdtB and MdtC. MdtC forms a heteromultimer with MdtB.

The protein localises to the cell inner membrane. The MdtABC tripartite complex confers resistance against novobiocin and deoxycholate. In Escherichia coli O127:H6 (strain E2348/69 / EPEC), this protein is Multidrug resistance protein MdtC.